The chain runs to 431 residues: Na(+)-translocating NADH-quinone reductase subunit F (431 aa).

The helical transmembrane segment at 10 to 30 threads the bilayer; that stretch reads IFVASAAFCSLGLILVAVILL. Residues 41–133 form the 2Fe-2S ferredoxin-type domain; the sequence is CKLKINNDDS…DLCLEVEERY (93 aa). [2Fe-2S] cluster-binding residues include cysteine 76, cysteine 82, cysteine 85, and cysteine 117. The FAD-binding FR-type domain occupies 136–286; sequence ASSWEGTVVS…SGPYGESFMK (151 aa).

It belongs to the NqrF family. Composed of six subunits; NqrA, NqrB, NqrC, NqrD, NqrE and NqrF. It depends on [2Fe-2S] cluster as a cofactor. The cofactor is FAD.

It localises to the cell inner membrane. The enzyme catalyses a ubiquinone + n Na(+)(in) + NADH + H(+) = a ubiquinol + n Na(+)(out) + NAD(+). Its function is as follows. NQR complex catalyzes the reduction of ubiquinone-1 to ubiquinol by two successive reactions, coupled with the transport of Na(+) ions from the cytoplasm to the periplasm. The first step is catalyzed by NqrF, which accepts electrons from NADH and reduces ubiquinone-1 to ubisemiquinone by a one-electron transfer pathway. This Chlamydia trachomatis serovar A (strain ATCC VR-571B / DSM 19440 / HAR-13) protein is Na(+)-translocating NADH-quinone reductase subunit F.